A 135-amino-acid chain; its full sequence is Small ribosomal subunit protein uS12 (135 aa).

The residue at position 89 (aspartate 89) is a 3-methylthioaspartic acid. The tract at residues 101 to 135 is disordered; that stretch reads SLDTSGVADRKQSRSKYGAKQPKAGAAAPAKGKGR. A compositionally biased stretch (low complexity) spans 118-135; it reads GAKQPKAGAAAPAKGKGR.

Belongs to the universal ribosomal protein uS12 family. As to quaternary structure, part of the 30S ribosomal subunit. Contacts proteins S8 and S17. May interact with IF1 in the 30S initiation complex.

Its function is as follows. With S4 and S5 plays an important role in translational accuracy. In terms of biological role, interacts with and stabilizes bases of the 16S rRNA that are involved in tRNA selection in the A site and with the mRNA backbone. Located at the interface of the 30S and 50S subunits, it traverses the body of the 30S subunit contacting proteins on the other side and probably holding the rRNA structure together. The combined cluster of proteins S8, S12 and S17 appears to hold together the shoulder and platform of the 30S subunit. This Chlorobium limicola (strain DSM 245 / NBRC 103803 / 6330) protein is Small ribosomal subunit protein uS12.